A 117-amino-acid polypeptide reads, in one-letter code: Ribosome-binding factor A (117 aa).

This sequence belongs to the RbfA family. In terms of assembly, monomer. Binds 30S ribosomal subunits, but not 50S ribosomal subunits or 70S ribosomes.

Its subcellular location is the cytoplasm. In terms of biological role, one of several proteins that assist in the late maturation steps of the functional core of the 30S ribosomal subunit. Associates with free 30S ribosomal subunits (but not with 30S subunits that are part of 70S ribosomes or polysomes). Required for efficient processing of 16S rRNA. May interact with the 5'-terminal helix region of 16S rRNA. The chain is Ribosome-binding factor A from Anaplasma marginale (strain St. Maries).